The chain runs to 3253 residues: tRNA nuclease CdiA (3253 aa).

The signal sequence occupies residues 1–32 (MHQPPVRFPYRLLSYLISTIIAGQPLLPAVGA). Positions 36-322 (PQNGAGMDKA…AGGNLSVTGT (287 aa)) are two-partner system transport domain (TPS). Residues 351–1384 (GELTAGQNAM…ITIRTGHLLN (1034 aa)) form an FHA-1 region. The tract at residues 1385–1656 (QREGINETKS…DLASGIVEGN (272 aa)) is receptor binding domain (RBD). The tract at residues 1657 to 1841 (YPLPSGNNGY…LSPKDVTLQN (185 aa)) is YP domain. The segment at 1842 to 1902 (GSIISGQNVH…GLKAMGDINN (61 aa)) is periplasmic FHA-1 repeat (pFR). The tract at residues 1944–2548 (TYTGSIASVS…TSKYDSKQTS (605 aa)) is FHA-2. Disordered regions lie at residues 2228-2252 (GSSKTTHDRREAGTTQSQSASTIGS), 2362-2410 (TGDP…GKNR), 2483-2503 (GSEKGNGTEWTETTTDSGKTV), and 2687-2712 (IRDRDNQKQNPADLSRDPAHANDSIS). Polar residues-rich tracts occupy residues 2240–2252 (GTTQSQSASTIGS), 2368–2403 (TGVSLSLTTQKSKSQQHSESDTVSGSTLNAGNNLSV), and 2490–2503 (TEWTETTTDSGKTV). Residues 2888 to 2930 (SDLSEEQKQTISTLATVSAGLAGGLTGNSSASAAVGAQSGKNA) form a pretoxin (PT) domain region. Positions 2931-2934 (VDNN) match the VDNN CT cleavage motif motif. A C-terminal effector domain (CT) region spans residues 2931–3253 (VDNNYLSVSE…TGIVSNFHPK (323 aa)).

This sequence in the N-terminal section; belongs to the CdiA toxin family. The protein in the C-terminal section; belongs to the bacterial EndoU family. In terms of assembly, forms a 1:1 complex with cognate immunity protein CdiI-STECO31. Requires tRNase activity is metal-independent. as cofactor. In terms of processing, the CT domain is cleaved upon binding to receptor Tsx on target cells.

Its subcellular location is the secreted. It is found in the target cell. The protein resides in the target cell cytoplasm. Toxic component of a toxin-immunity protein module, which functions as a cellular contact-dependent growth inhibition (CDI) system. CDI modules allow bacteria to communicate with and inhibit the growth of closely related neighboring target bacteria in a contact-dependent fashion (target cell counts decrease 1000- to 10000-fold with this CDI). Uses outer membrane nucleoside transporter Tsx on target cells as a receptor. Gains access to the cytoplasm of target cells by using integral inner membrane protein PTS system glucose-specific EIICB component (ptsG). Targeting of the C-terminal domain (CT) domain (residues 2931-3253) in the absence of immunity protein inhibits cell growth and causes tRNA(UUC-Glu) cleavage; expression of cognate immunity protein CdiI-STECO31 neutralizes growth inhibition leaving tRNA(UUC-Glu) is intact, whereas non-cognate immunity proteins do not confer protection. The CT domain cleaves tRNA; it is most active against tRNA(UUC-Glu), but also has modest activity against tRNA(GUC-Asp), tRNA(UUG-Gln), tRNA(CCC-Gly), tRNA(UCC-Gly), tRNA(GCC-Gly), tRNA(UUU-Lys), tRNA(GGU-Thr) and tRNA(CCA-Trp); tRNA cleavage is inhibited by cognate immunity protein CdiI. Cleavage of tRNA(UUC-Glu) occurs in the anticodon loop between cytosine(37) and 2-methyladenosine(38) (C37-m2A38) and probably also occurs in the anticodon loop of other tRNAs as well. In terms of biological role, the CdiA protein is thought to be exported from the cell through the central lumen of CdiB, the other half of its two-partner system (TPS). The TPS domain probably remains associated with CdiB while the FHA-1 domain forms an extended filament (33 nm long) with the receptor-binding domain (RBD) at its extremity; in the secretion arrested state the C-terminus of the RBD and YP domains form a hairpin-like structure as the FHA-2, PT and CT domains are periplasmic. The YP domain is probably responsible for this arrest at the point where it re-enters the host cell periplasm. Upon binding to a target cell outer membrane receptor (Tsx for this CDI) a signal is transmitted to activate secretion. The filament becomes about 5 nm longer, the rest of CdiA is secreted and the FHA-2 domain becomes stably associated with the target cell's outer membrane where it facilitates entry of the toxic CT domain into the target cell periplasm. From there the toxic CT domain is cleaved and gains access to the target cell cytoplasm via an inner membrane protein (PTS system glucose-specific EIICB component, ptsG for this CDI). The polypeptide is tRNA nuclease CdiA (Escherichia coli (strain STEC_O31)).